Reading from the N-terminus, the 94-residue chain is Large ribosomal subunit protein uL23 (94 aa).

It belongs to the universal ribosomal protein uL23 family. In terms of assembly, part of the 50S ribosomal subunit. Contacts protein L29, and trigger factor when it is bound to the ribosome.

In terms of biological role, one of the early assembly proteins it binds 23S rRNA. One of the proteins that surrounds the polypeptide exit tunnel on the outside of the ribosome. Forms the main docking site for trigger factor binding to the ribosome. This is Large ribosomal subunit protein uL23 from Treponema pallidum (strain Nichols).